Consider the following 186-residue polypeptide: Pyridoxal 5'-phosphate synthase subunit PdxT (186 aa).

47–49 (GES) is an L-glutamine binding site. Cysteine 79 functions as the Nucleophile in the catalytic mechanism. Residues arginine 106 and 134 to 135 (IR) contribute to the L-glutamine site. Active-site charge relay system residues include histidine 170 and glutamate 172.

It belongs to the glutaminase PdxT/SNO family. In the presence of PdxS, forms a dodecamer of heterodimers. Only shows activity in the heterodimer.

The catalysed reaction is aldehydo-D-ribose 5-phosphate + D-glyceraldehyde 3-phosphate + L-glutamine = pyridoxal 5'-phosphate + L-glutamate + phosphate + 3 H2O + H(+). The enzyme catalyses L-glutamine + H2O = L-glutamate + NH4(+). It functions in the pathway cofactor biosynthesis; pyridoxal 5'-phosphate biosynthesis. Catalyzes the hydrolysis of glutamine to glutamate and ammonia as part of the biosynthesis of pyridoxal 5'-phosphate. The resulting ammonia molecule is channeled to the active site of PdxS. The protein is Pyridoxal 5'-phosphate synthase subunit PdxT of Methanothrix thermoacetophila (strain DSM 6194 / JCM 14653 / NBRC 101360 / PT) (Methanosaeta thermophila).